Consider the following 204-residue polypeptide: Fluoride-specific ion channel FluC 3 (204 aa).

Positions 1-16 are enriched in basic and acidic residues; sequence MRADESGPERESREPT. Positions 1–53 are disordered; it reads MRADESGPERESREPTHIPGAEPELGGEPTPRGEPGPGFEPGPGGEPAPSRAP. A compositionally biased stretch (pro residues) spans 32–46; sequence RGEPGPGFEPGPGGE. A run of 4 helical transmembrane segments spans residues 62–82, 96–116, 125–145, and 158–178; these read VLAAVALGGVLGGSARYALGL, FAVNVSGAFLLALLLVYVLEI, PFAAVGFLGSFTTFSTWMVDT, and AFNVFGSLFAGLAATGLGLAI. Na(+)-binding residues include Gly-133 and Thr-136.

It belongs to the fluoride channel Fluc/FEX (TC 1.A.43) family.

Its subcellular location is the cell membrane. It catalyses the reaction fluoride(in) = fluoride(out). Na(+) is not transported, but it plays an essential structural role and its presence is essential for fluoride channel function. Fluoride-specific ion channel. Important for reducing fluoride concentration in the cell, thus reducing its toxicity. The protein is Fluoride-specific ion channel FluC 3 of Streptomyces avermitilis (strain ATCC 31267 / DSM 46492 / JCM 5070 / NBRC 14893 / NCIMB 12804 / NRRL 8165 / MA-4680).